Here is a 196-residue protein sequence, read N- to C-terminus: Holliday junction branch migration complex subunit RuvA (196 aa).

Residues methionine 1–leucine 63 form a domain I region. The segment at asparagine 64–asparagine 135 is domain II. The interval asparagine 135 to serine 138 is flexible linker. The tract at residues serine 139–glycine 196 is domain III.

This sequence belongs to the RuvA family. In terms of assembly, homotetramer. Forms an RuvA(8)-RuvB(12)-Holliday junction (HJ) complex. HJ DNA is sandwiched between 2 RuvA tetramers; dsDNA enters through RuvA and exits via RuvB. An RuvB hexamer assembles on each DNA strand where it exits the tetramer. Each RuvB hexamer is contacted by two RuvA subunits (via domain III) on 2 adjacent RuvB subunits; this complex drives branch migration. In the full resolvosome a probable DNA-RuvA(4)-RuvB(12)-RuvC(2) complex forms which resolves the HJ.

The protein localises to the cytoplasm. In terms of biological role, the RuvA-RuvB-RuvC complex processes Holliday junction (HJ) DNA during genetic recombination and DNA repair, while the RuvA-RuvB complex plays an important role in the rescue of blocked DNA replication forks via replication fork reversal (RFR). RuvA specifically binds to HJ cruciform DNA, conferring on it an open structure. The RuvB hexamer acts as an ATP-dependent pump, pulling dsDNA into and through the RuvAB complex. HJ branch migration allows RuvC to scan DNA until it finds its consensus sequence, where it cleaves and resolves the cruciform DNA. The sequence is that of Holliday junction branch migration complex subunit RuvA from Borrelia turicatae (strain 91E135).